Here is a 206-residue protein sequence, read N- to C-terminus: 3-isopropylmalate dehydratase small subunit (206 aa).

This sequence belongs to the LeuD family. LeuD type 1 subfamily. Heterodimer of LeuC and LeuD.

It catalyses the reaction (2R,3S)-3-isopropylmalate = (2S)-2-isopropylmalate. It participates in amino-acid biosynthesis; L-leucine biosynthesis; L-leucine from 3-methyl-2-oxobutanoate: step 2/4. In terms of biological role, catalyzes the isomerization between 2-isopropylmalate and 3-isopropylmalate, via the formation of 2-isopropylmaleate. The chain is 3-isopropylmalate dehydratase small subunit from Leptospira borgpetersenii serovar Hardjo-bovis (strain JB197).